The primary structure comprises 481 residues: Dihydrolipoyl dehydrogenase (481 aa).

FAD-binding positions include 34–42 (EREHMGGIC) and lysine 51. A disulfide bridge connects residues cysteine 42 and cysteine 47. NAD(+) is bound by residues 195 to 199 (GSGAI), glutamate 218, and 284 to 287 (AVGV). FAD is bound by residues aspartate 326 and alanine 334. The active-site Proton acceptor is the histidine 460.

The protein belongs to the class-I pyridine nucleotide-disulfide oxidoreductase family. Homodimer. It depends on FAD as a cofactor.

Its subcellular location is the cytoplasm. It catalyses the reaction N(6)-[(R)-dihydrolipoyl]-L-lysyl-[protein] + NAD(+) = N(6)-[(R)-lipoyl]-L-lysyl-[protein] + NADH + H(+). In terms of biological role, lipoamide dehydrogenase is a component of the alpha-ketoacid dehydrogenase complexes. This Rhizobium etli (strain ATCC 51251 / DSM 11541 / JCM 21823 / NBRC 15573 / CFN 42) protein is Dihydrolipoyl dehydrogenase (lpdA).